The primary structure comprises 254 residues: 5'/3'-nucleotidase SurE (254 aa).

A divalent metal cation contacts are provided by aspartate 9, aspartate 10, serine 40, and asparagine 93.

Belongs to the SurE nucleotidase family. A divalent metal cation serves as cofactor.

It localises to the cytoplasm. It carries out the reaction a ribonucleoside 5'-phosphate + H2O = a ribonucleoside + phosphate. The enzyme catalyses a ribonucleoside 3'-phosphate + H2O = a ribonucleoside + phosphate. The catalysed reaction is [phosphate](n) + H2O = [phosphate](n-1) + phosphate + H(+). Functionally, nucleotidase with a broad substrate specificity as it can dephosphorylate various ribo- and deoxyribonucleoside 5'-monophosphates and ribonucleoside 3'-monophosphates with highest affinity to 3'-AMP. Also hydrolyzes polyphosphate (exopolyphosphatase activity) with the preference for short-chain-length substrates (P20-25). Might be involved in the regulation of dNTP and NTP pools, and in the turnover of 3'-mononucleotides produced by numerous intracellular RNases (T1, T2, and F) during the degradation of various RNAs. The sequence is that of 5'/3'-nucleotidase SurE from Yersinia pseudotuberculosis serotype O:1b (strain IP 31758).